The chain runs to 194 residues: Adenine phosphoribosyltransferase (194 aa).

It belongs to the purine/pyrimidine phosphoribosyltransferase family. In terms of assembly, homodimer.

It is found in the cytoplasm. It catalyses the reaction AMP + diphosphate = 5-phospho-alpha-D-ribose 1-diphosphate + adenine. Its pathway is purine metabolism; AMP biosynthesis via salvage pathway; AMP from adenine: step 1/1. In terms of biological role, catalyzes a salvage reaction resulting in the formation of AMP, that is energically less costly than de novo synthesis. The sequence is that of Adenine phosphoribosyltransferase from Albidiferax ferrireducens (strain ATCC BAA-621 / DSM 15236 / T118) (Rhodoferax ferrireducens).